The following is a 449-amino-acid chain: Aminopeptidase C (449 aa).

Catalysis depends on residues Cys-70, His-364, and Asn-385.

Belongs to the peptidase C1 family. As to quaternary structure, homohexamer.

It is found in the cytoplasm. It catalyses the reaction Inactivates bleomycin B2 (a cytotoxic glycometallopeptide) by hydrolysis of a carboxyamide bond of beta-aminoalanine, but also shows general aminopeptidase activity. The specificity varies somewhat with source, but amino acid arylamides of Met, Leu and Ala are preferred.. The polypeptide is Aminopeptidase C (pepC) (Lactobacillus helveticus (Lactobacillus suntoryeus)).